The chain runs to 214 residues: ATP phosphoribosyltransferase (214 aa).

It belongs to the ATP phosphoribosyltransferase family. Short subfamily. In terms of assembly, heteromultimer composed of HisG and HisZ subunits.

The protein localises to the cytoplasm. It carries out the reaction 1-(5-phospho-beta-D-ribosyl)-ATP + diphosphate = 5-phospho-alpha-D-ribose 1-diphosphate + ATP. It functions in the pathway amino-acid biosynthesis; L-histidine biosynthesis; L-histidine from 5-phospho-alpha-D-ribose 1-diphosphate: step 1/9. Catalyzes the condensation of ATP and 5-phosphoribose 1-diphosphate to form N'-(5'-phosphoribosyl)-ATP (PR-ATP). Has a crucial role in the pathway because the rate of histidine biosynthesis seems to be controlled primarily by regulation of HisG enzymatic activity. This chain is ATP phosphoribosyltransferase, found in Streptococcus sanguinis (strain SK36).